The sequence spans 130 residues: MEEEEIRTWSFPEEVWQVATQPDSQQQHEDQHLSHTFLDKKDWTGNELHECNELGKKLHQNPNLLPSKQQVRTRDLCRKSLMCNLDFTPNAYLARRRFQCDGHGNFFSVRNLKLHLQERIHAEVTSVEVL.

The polypeptide is Putative protein ZNF815 (ZNF815P) (Homo sapiens (Human)).